Reading from the N-terminus, the 344-residue chain is Succinylglutamate desuccinylase (344 aa).

Zn(2+) is bound by residues H63, E66, and H160. Residue E224 is part of the active site.

It belongs to the AspA/AstE family. Succinylglutamate desuccinylase subfamily. Zn(2+) is required as a cofactor.

It carries out the reaction N-succinyl-L-glutamate + H2O = L-glutamate + succinate. It participates in amino-acid degradation; L-arginine degradation via AST pathway; L-glutamate and succinate from L-arginine: step 5/5. Transforms N(2)-succinylglutamate into succinate and glutamate. The protein is Succinylglutamate desuccinylase of Shewanella sp. (strain MR-7).